The chain runs to 323 residues: Solute carrier family 35 member B1 (323 aa).

8 helical membrane-spanning segments follow: residues 15–35 (LVCFLGVFVCYFYYGILQETI), 51–71 (FALSLVFVQCIVNALFAKLLI), 85–105 (WLYAACSLSYLGAMVSSNSAL), 136–156 (YPLSKYLCVLLIVLGVALFMY), 169–189 (TFGYGELLLLLSLTLDGLTGV), 205–225 (MMLYINLWSSLFLGAGIVFTG), 253–273 (LGQTFIFMTVVYFGPLTCSII), and 286–306 (VILFSNPISSIQWVGTILVFL). Positions 319 to 323 (KKPSH) match the Di-lysine motif motif.

The protein belongs to the nucleotide-sugar transporter family. SLC35B subfamily.

Its subcellular location is the endoplasmic reticulum membrane. Its function is as follows. Probable sugar transporter. The chain is Solute carrier family 35 member B1 (slc35b1) from Xenopus tropicalis (Western clawed frog).